Reading from the N-terminus, the 311-residue chain is p-hydroxybenzoic acid efflux pump subunit AaeA (311 aa).

A helical membrane pass occupies residues 11–31; that stretch reads IGITLLVVLLAVIAIFKVWAF.

Belongs to the membrane fusion protein (MFP) (TC 8.A.1) family.

The protein resides in the cell inner membrane. Forms an efflux pump with AaeB. The chain is p-hydroxybenzoic acid efflux pump subunit AaeA from Yersinia enterocolitica serotype O:8 / biotype 1B (strain NCTC 13174 / 8081).